A 210-amino-acid chain; its full sequence is Large ribosomal subunit protein uL3 (210 aa).

The interval 133 to 152 is disordered; sequence ATHGNSLSHRVHGSTGQNQT. Gln-151 is subject to N5-methylglutamine.

Belongs to the universal ribosomal protein uL3 family. In terms of assembly, part of the 50S ribosomal subunit. Forms a cluster with proteins L14 and L19. Methylated by PrmB.

In terms of biological role, one of the primary rRNA binding proteins, it binds directly near the 3'-end of the 23S rRNA, where it nucleates assembly of the 50S subunit. This chain is Large ribosomal subunit protein uL3, found in Francisella tularensis subsp. holarctica (strain FTNF002-00 / FTA).